The chain runs to 89 residues: Small ribosomal subunit protein uS17 (89 aa).

Belongs to the universal ribosomal protein uS17 family. In terms of assembly, part of the 30S ribosomal subunit.

One of the primary rRNA binding proteins, it binds specifically to the 5'-end of 16S ribosomal RNA. This Acidovorax ebreus (strain TPSY) (Diaphorobacter sp. (strain TPSY)) protein is Small ribosomal subunit protein uS17.